The chain runs to 1043 residues: Carbamoyl phosphate synthase arginine-specific large chain (1043 aa).

A carboxyphosphate synthetic domain region spans residues 1-402; the sequence is MPKDSSLQSI…AFQKAVQSLE (402 aa). Positions 134–328 constitute an ATP-grasp 1 domain; it reads RALMHELGEP…IAALPAKLAV (195 aa). ATP is bound by residues R170, G176, G177, R209, V211, E216, G242, I243, H244, Q285, and E299. Mg(2+) is bound by residues Q285, E299, and N301. The Mn(2+) site is built by Q285, E299, and N301. Oligomerization domain stretches follow at residues 403–549 and 403–550; these read GKNN…GEDE and GKNN…EDER. Carbamoyl phosphate synthetic domain regions lie at residues 550–932 and 551–932; these read RKQP…YPYL and KQPS…YPYL. Positions 676–863 constitute an ATP-grasp 2 domain; sequence YQLLEELDIP…LAQIATKLLL (188 aa). Positions 712, 748, 750, 754, 779, 780, 781, 782, 822, and 834 each coordinate ATP. The Mg(2+) site is built by Q822, E834, and N836. Positions 822, 834, and 836 each coordinate Mn(2+). The MGS-like domain maps to 930 to 1037; sequence PYLQKKANAN…HGWLEKKKQA (108 aa). Residues 933–1043 form an allosteric domain region; the sequence is QKKANANEVY…KKQAEQAVIA (111 aa).

This sequence belongs to the CarB family. Composed of two chains; the small (or glutamine) chain promotes the hydrolysis of glutamine to ammonia, which is used by the large (or ammonia) chain to synthesize carbamoyl phosphate. Tetramer of heterodimers (alpha,beta)4. The cofactor is Mg(2+). Requires Mn(2+) as cofactor.

It catalyses the reaction hydrogencarbonate + L-glutamine + 2 ATP + H2O = carbamoyl phosphate + L-glutamate + 2 ADP + phosphate + 2 H(+). The catalysed reaction is hydrogencarbonate + NH4(+) + 2 ATP = carbamoyl phosphate + 2 ADP + phosphate + 2 H(+). It functions in the pathway amino-acid biosynthesis; L-arginine biosynthesis; carbamoyl phosphate from bicarbonate: step 1/1. Large subunit of the glutamine-dependent carbamoyl phosphate synthetase (CPSase). CPSase catalyzes the formation of carbamoyl phosphate from the ammonia moiety of glutamine, carbonate, and phosphate donated by ATP, constituting the first step of the biosynthetic pathway leading to arginine and/or urea. The large subunit (synthetase) binds the substrates ammonia (free or transferred from glutamine from the small subunit), hydrogencarbonate and ATP and carries out an ATP-coupled ligase reaction, activating hydrogencarbonate by forming carboxy phosphate which reacts with ammonia to form carbamoyl phosphate. In Geobacillus stearothermophilus (Bacillus stearothermophilus), this protein is Carbamoyl phosphate synthase arginine-specific large chain (carB).